The chain runs to 445 residues: Phosphoglucosamine mutase (445 aa).

S102 functions as the Phosphoserine intermediate in the catalytic mechanism. Mg(2+) is bound by residues S102, D241, D243, and D245. At S102 the chain carries Phosphoserine.

It belongs to the phosphohexose mutase family. Mg(2+) serves as cofactor. Post-translationally, activated by phosphorylation.

It catalyses the reaction alpha-D-glucosamine 1-phosphate = D-glucosamine 6-phosphate. In terms of biological role, catalyzes the conversion of glucosamine-6-phosphate to glucosamine-1-phosphate. This Escherichia coli (strain 55989 / EAEC) protein is Phosphoglucosamine mutase.